The primary structure comprises 288 residues: Ribosomal RNA small subunit methyltransferase I (288 aa).

The protein belongs to the methyltransferase superfamily. RsmI family.

Its subcellular location is the cytoplasm. The enzyme catalyses cytidine(1402) in 16S rRNA + S-adenosyl-L-methionine = 2'-O-methylcytidine(1402) in 16S rRNA + S-adenosyl-L-homocysteine + H(+). Functionally, catalyzes the 2'-O-methylation of the ribose of cytidine 1402 (C1402) in 16S rRNA. The protein is Ribosomal RNA small subunit methyltransferase I of Vibrio cholerae serotype O1 (strain ATCC 39315 / El Tor Inaba N16961).